Here is a 947-residue protein sequence, read N- to C-terminus: Translation initiation factor IF-2 (947 aa).

The interval 55-361 (TKDAQAGSAK…PVTERKFHEL (307 aa)) is disordered. Basic and acidic residues predominate over residues 63-73 (AKDKQVAEQKA). Residues 76–90 (AKATTPQPAAATQEA) show a composition bias toward low complexity. Composition is skewed to basic and acidic residues over residues 103–116 (FKAEREARAKEQAA), 125–134 (SNDRKSDYRQ), and 170–183 (NDGHRQAGNRDKNR). The span at 190 to 204 (RQQDTGRQGQTQAGA) shows a compositional bias: low complexity. Composition is skewed to basic and acidic residues over residues 225–249 (ARQRESRFREQEEAKRLEQQARQEA), 257–267 (QTEDKKHREAS), and 294–311 (NRPDKGHDRDHGLEDGQK). Residues 316–334 (SWNSQNQVRNQKNSNWNNN) are compositionally biased toward low complexity. Positions 335 to 345 (KKNKKGKHHKN) are enriched in basic residues. The tr-type G domain occupies 448-617 (ERAPVVTIMG…LLVAEVEELK (170 aa)). Residues 457-464 (GHVDHGKT) form a G1 region. Residue 457–464 (GHVDHGKT) coordinates GTP. Residues 482–486 (GITQH) form a G2 region. Residues 503–506 (DTPG) are G3. GTP contacts are provided by residues 503–507 (DTPGH) and 557–560 (NKID). The interval 557–560 (NKID) is G4. The segment at 593–595 (SAK) is G5.

Belongs to the TRAFAC class translation factor GTPase superfamily. Classic translation factor GTPase family. IF-2 subfamily.

The protein localises to the cytoplasm. Its function is as follows. One of the essential components for the initiation of protein synthesis. Protects formylmethionyl-tRNA from spontaneous hydrolysis and promotes its binding to the 30S ribosomal subunits. Also involved in the hydrolysis of GTP during the formation of the 70S ribosomal complex. This Streptococcus equi subsp. zooepidemicus (strain MGCS10565) protein is Translation initiation factor IF-2.